Reading from the N-terminus, the 173-residue chain is Dual-action ribosomal maturation protein DarP (173 aa).

This sequence belongs to the DarP family.

The protein resides in the cytoplasm. Functionally, member of a network of 50S ribosomal subunit biogenesis factors which assembles along the 30S-50S interface, preventing incorrect 23S rRNA structures from forming. Promotes peptidyl transferase center (PTC) maturation. The protein is Dual-action ribosomal maturation protein DarP of Pseudomonas fluorescens (strain ATCC BAA-477 / NRRL B-23932 / Pf-5).